We begin with the raw amino-acid sequence, 750 residues long: Photosystem I P700 chlorophyll a apoprotein A1 (750 aa).

A run of 8 helical transmembrane segments spans residues Val-70 to Ala-93, Leu-156 to His-179, Leu-195 to Leu-219, Ile-291 to Tyr-309, Trp-346 to Tyr-369, Leu-385 to Val-411, Ala-433 to His-455, and Phe-531 to Leu-549. 2 residues coordinate [4Fe-4S] cluster: Cys-573 and Cys-582. 2 helical membrane-spanning segments follow: residues His-589–Trp-610 and Leu-664–Phe-686. His-675 provides a ligand contact to chlorophyll a'. Chlorophyll a contacts are provided by Met-683 and Tyr-691. Trp-692 is a binding site for phylloquinone. The helical transmembrane segment at Ala-724 to Ala-744 threads the bilayer.

This sequence belongs to the PsaA/PsaB family. In terms of assembly, the PsaA/B heterodimer binds the P700 chlorophyll special pair and subsequent electron acceptors. PSI consists of a core antenna complex that captures photons, and an electron transfer chain that converts photonic excitation into a charge separation. The eukaryotic PSI reaction center is composed of at least 11 subunits. The cofactor is P700 is a chlorophyll a/chlorophyll a' dimer, A0 is one or more chlorophyll a, A1 is one or both phylloquinones and FX is a shared 4Fe-4S iron-sulfur center..

It localises to the plastid. It is found in the chloroplast thylakoid membrane. It carries out the reaction reduced [plastocyanin] + hnu + oxidized [2Fe-2S]-[ferredoxin] = oxidized [plastocyanin] + reduced [2Fe-2S]-[ferredoxin]. Functionally, psaA and PsaB bind P700, the primary electron donor of photosystem I (PSI), as well as the electron acceptors A0, A1 and FX. PSI is a plastocyanin-ferredoxin oxidoreductase, converting photonic excitation into a charge separation, which transfers an electron from the donor P700 chlorophyll pair to the spectroscopically characterized acceptors A0, A1, FX, FA and FB in turn. Oxidized P700 is reduced on the lumenal side of the thylakoid membrane by plastocyanin. The sequence is that of Photosystem I P700 chlorophyll a apoprotein A1 from Oryza nivara (Indian wild rice).